The primary structure comprises 288 residues: MKKLSFQQIILTLQNYWQDYGCAILQPYDAHVGAGTFHPATVLRCLGTKPWSVAYVQPSRRPGDSRYGMHPNRMQHYYQFQVILKPSPDNIQELYLKSLEYLGIDLKIHDIRFVEDDWESPTLGAAGLGWEVWCNGMEVSQFTYMQQIGGIECRPVAGEITYGLERLALYIQGVDEVRELDWNGQVGEKALKYGEVDFEAEWQFSKYNLELADSEMLLRHFKDSEDQCERLIKANLPMPAYDECLKASHAFNQLNALGVISVTERASYVLRVRHLARICCTKWLEMNK.

It belongs to the class-II aminoacyl-tRNA synthetase family. In terms of assembly, tetramer of two alpha and two beta subunits.

It localises to the cytoplasm. It carries out the reaction tRNA(Gly) + glycine + ATP = glycyl-tRNA(Gly) + AMP + diphosphate. The protein is Glycine--tRNA ligase alpha subunit of Rickettsia peacockii (strain Rustic).